The sequence spans 353 residues: Guanine nucleotide-binding protein subunit alpha (353 aa).

A disordered region spans residues 1–26 (MGCGMSTEEKEGKARNEEIENQLKRD). Gly2 carries the N-myristoyl glycine lipid modification. Cys3 carries S-palmitoyl cysteine lipidation. Over residues 7 to 26 (TEEKEGKARNEEIENQLKRD) the composition is skewed to basic and acidic residues. One can recognise a G-alpha domain in the interval 32–353 (NEIKMLLLGA…QENLRLCGLI (322 aa)). Residues 35–48 (KMLLLGAGESGKST) form a G1 motif region. Residues Glu43, Ser44, Gly45, Lys46, Ser47, Thr48, Asp150, Leu175, Thr181, Gly203, Asn269, Lys270, Asp272, and Ala325 each contribute to the GTP site. Mg(2+) is bound at residue Ser47. A G2 motif region spans residues 173 to 181 (DVLRSRVKT). Residue Thr181 coordinates Mg(2+). The segment at 196 to 205 (YRMFDVGGQR) is G3 motif. The segment at 265 to 272 (ILFLNKID) is G4 motif. The interval 323 to 328 (TCATDT) is G5 motif.

This sequence belongs to the G-alpha family. G(q) subfamily. In terms of assembly, g proteins are composed of 3 units; alpha, beta and gamma. The alpha chain contains the guanine nucleotide binding site. Mg(2+) serves as cofactor.

In terms of biological role, guanine nucleotide-binding proteins (G proteins) are involved as modulators or transducers in various transmembrane signaling systems. The chain is Guanine nucleotide-binding protein subunit alpha from Cryphonectria parasitica (Chestnut blight fungus).